We begin with the raw amino-acid sequence, 150 residues long: Urease accessory protein UreE (150 aa).

Belongs to the UreE family.

The protein localises to the cytoplasm. Involved in urease metallocenter assembly. Binds nickel. Probably functions as a nickel donor during metallocenter assembly. This chain is Urease accessory protein UreE, found in Streptococcus vestibularis.